The chain runs to 737 residues: Ribosome-releasing factor 2, mitochondrial (737 aa).

A mitochondrion-targeting transit peptide spans 1–36 (MLCNRLHKAAFAARLRPRLPATVASCRQVHNSDGTI). Positions 39–318 (KRIRNIGILA…SVLNFLPAPS (280 aa)) constitute a tr-type G domain. Residues 48-55 (AHIDAGKT), 112-116 (DTPGH), and 166-169 (NKMD) each bind GTP.

The protein belongs to the TRAFAC class translation factor GTPase superfamily. Classic translation factor GTPase family. EF-G/EF-2 subfamily.

Its subcellular location is the mitochondrion. Functionally, mitochondrial GTPase that mediates the disassembly of ribosomes from messenger RNA at the termination of mitochondrial protein biosynthesis. Not involved in the GTP-dependent ribosomal translocation step during translation elongation. The sequence is that of Ribosome-releasing factor 2, mitochondrial from Anopheles gambiae (African malaria mosquito).